The primary structure comprises 292 residues: Expansin-like protein 6 (292 aa).

Positions 1-24 are cleaved as a signal peptide; the sequence is MIKIIYLIVLLVLLFKNNHIIIKA. Residues 25–267 lie on the Extracellular side of the membrane; that stretch reads DDCPFPQIPI…QITSNSNNIL (243 aa). An Expansin-like EG45 domain is found at 47 to 150; sequence HASCGFEKLT…IKVPCPTYGN (104 aa). 2 disulfides stabilise this stretch: Cys50-Cys80 and Cys83-Cys145. Asn92 carries N-linked (GlcNAc...) asparagine glycosylation. A helical transmembrane segment spans residues 268 to 288; the sequence is PPSLYIIFLISILFLIINNIF. Residues 289–292 are Cytoplasmic-facing; that stretch reads SNKY.

The protein belongs to the expansin family. Expansin A subfamily.

It is found in the membrane. Its function is as follows. May serve to lubricate the movement of the cellulose microfibrils during cell growth and wall extension and/or may serve to maintain the fluid state of the slug cell wall. In Dictyostelium discoideum (Social amoeba), this protein is Expansin-like protein 6 (expl6).